We begin with the raw amino-acid sequence, 469 residues long: Type II secretion system protein HxcR (469 aa).

Gly-246 to Thr-253 serves as a coordination point for ATP.

This sequence belongs to the GSP E family.

It localises to the cytoplasm. It catalyses the reaction ATP + H2O + cellular proteinSide 1 = ADP + phosphate + cellular proteinSide 2.. Functionally, ATPase component of the type II secretion system required for the energy-dependent secretion of extracellular factors from the periplasm. Acts as a molecular motor to provide the energy that is required for the export of proteins. The Hxc system is involved in the secretion of low-molecular-weight alkaline phosphatase L-AP (LapA). Is probably also involved in the secretion of the phosphate-binding protein PstS. The protein is Type II secretion system protein HxcR of Pseudomonas aeruginosa (strain ATCC 15692 / DSM 22644 / CIP 104116 / JCM 14847 / LMG 12228 / 1C / PRS 101 / PAO1).